Reading from the N-terminus, the 308-residue chain is Elongation factor Ts (308 aa).

Residues 80-83 (TDFV) are involved in Mg(2+) ion dislocation from EF-Tu.

It belongs to the EF-Ts family.

It is found in the cytoplasm. Functionally, associates with the EF-Tu.GDP complex and induces the exchange of GDP to GTP. It remains bound to the aminoacyl-tRNA.EF-Tu.GTP complex up to the GTP hydrolysis stage on the ribosome. This Rhodopseudomonas palustris (strain ATCC BAA-98 / CGA009) protein is Elongation factor Ts.